A 353-amino-acid chain; its full sequence is Inactive ADP-ribosyltransferase ARH2 (353 aa).

A Phosphoserine modification is found at Ser-27.

It belongs to the ADP-ribosylglycohydrolase family. As to expression, expressed in the embryonic heart at E11.5.

It localises to the cytoplasm. Its subcellular location is the myofibril. The protein localises to the sarcomere. In terms of biological role, required for myofibril assembly and outgrowth of the cardiac chambers in the developing heart. Appears to be catalytically inactive, showing no activity against O-acetyl-ADP-ribose. This chain is Inactive ADP-ribosyltransferase ARH2 (Adprhl1), found in Mus musculus (Mouse).